A 719-amino-acid polypeptide reads, in one-letter code: Anaphase-promoting complex subunit 4 (719 aa).

One copy of the WD repeat lies at N57 to D96.

The APC/C is composed of at least 13 subunits: apc1, apc2, nuc2, apc4, apc5, cut9, apc8, apc10, apc11, hcn1, apc13, apc14 and apc15. Interacts with apc1 and dim1.

Functionally, component of the anaphase-promoting complex/cyclosome (APC/C), a cell cycle-regulated E3 ubiquitin-protein ligase complex that controls progression through mitosis and the G1 phase of the cell cycle. The APC/C is thought to confer substrate specificity and, in the presence of ubiquitin-conjugating E2 enzymes, it catalyzes the formation of protein-ubiquitin conjugates that are subsequently degraded by the 26S proteasome. Has a role in promoting metaphase to anaphase transition via the ubiquitination of specific mitotic substrates. In Schizosaccharomyces pombe (strain 972 / ATCC 24843) (Fission yeast), this protein is Anaphase-promoting complex subunit 4 (cut20).